A 645-amino-acid polypeptide reads, in one-letter code: DNA mismatch repair protein MutL (645 aa).

The disordered stretch occupies residues 371 to 403; sequence VHDQKDKNHDVESHKNNLDSTSSTNNESTEVSN. Residues 372–387 show a composition bias toward basic and acidic residues; that stretch reads HDQKDKNHDVESHKNN. Over residues 390–402 the composition is skewed to low complexity; that stretch reads STSSTNNESTEVS.

This sequence belongs to the DNA mismatch repair MutL/HexB family.

Its function is as follows. This protein is involved in the repair of mismatches in DNA. It is required for dam-dependent methyl-directed DNA mismatch repair. May act as a 'molecular matchmaker', a protein that promotes the formation of a stable complex between two or more DNA-binding proteins in an ATP-dependent manner without itself being part of a final effector complex. The polypeptide is DNA mismatch repair protein MutL (Staphylococcus epidermidis (strain ATCC 35984 / DSM 28319 / BCRC 17069 / CCUG 31568 / BM 3577 / RP62A)).